A 422-amino-acid chain; its full sequence is F-box/WD repeat-containing protein 2 (422 aa).

In terms of domain architecture, F-box spans 54–101 (RDFLKLLPLELSFYLLKWLDPQTLLTCCLVSKQWNKVISACTEVWQTA). 4 WD repeats span residues 146–183 (GHSA…CVYG), 185–221 (QTHT…RTQH), 224–265 (GHTG…NTLT), and 276–314 (LQKC…NCKC). N6-acetyllysine is present on Lys298.

As to quaternary structure, directly interacts with SKP1 and CUL1. As to expression, widely expressed during embryogenesis and in adult tissues.

Its function is as follows. Substrate-recognition component of the SCF (SKP1-CUL1-F-box protein)-type E3 ubiquitin ligase complex. The chain is F-box/WD repeat-containing protein 2 (Fbxw2) from Mus musculus (Mouse).